A 229-amino-acid chain; its full sequence is UPF0758 protein Mbar_A2303 (229 aa).

The 123-residue stretch at 106–228 (KVCSPKDVYT…YVSLKDEGFV (123 aa)) folds into the MPN domain. His177, His179, and Asp190 together coordinate Zn(2+). Positions 177–190 (HNHPSGDPSPSRED) match the JAMM motif motif.

This sequence belongs to the UPF0758 family.

The chain is UPF0758 protein Mbar_A2303 from Methanosarcina barkeri (strain Fusaro / DSM 804).